We begin with the raw amino-acid sequence, 558 residues long: Formate--tetrahydrofolate ligase (558 aa).

65 to 72 (TPAGEGKT) is an ATP binding site.

It belongs to the formate--tetrahydrofolate ligase family.

The catalysed reaction is (6S)-5,6,7,8-tetrahydrofolate + formate + ATP = (6R)-10-formyltetrahydrofolate + ADP + phosphate. Its pathway is one-carbon metabolism; tetrahydrofolate interconversion. The polypeptide is Formate--tetrahydrofolate ligase (Methylobacterium sp. (strain 4-46)).